The primary structure comprises 731 residues: DNA topoisomerase 1 (731 aa).

A Toprim domain is found at 17 to 130; it reads KHLVIVESPA…KRIVFNEITP (114 aa). 2 residues coordinate Mg(2+): E23 and D96. Residues 144–569 enclose the Topo IA-type catalytic domain; the sequence is DTAKVNAQKA…DFYPAFSEKV (426 aa). Residues 178–183 are interaction with DNA; the sequence is SAGRVQ. Y312 serves as the catalytic O-(5'-phospho-DNA)-tyrosine intermediate. 3 C4-type zinc fingers span residues 591-617, 628-657, and 670-696; these read CSQC…FPEC, CPRP…FPVC, and CPQC…NPEC.

Belongs to the type IA topoisomerase family. In terms of assembly, monomer. It depends on Mg(2+) as a cofactor.

The catalysed reaction is ATP-independent breakage of single-stranded DNA, followed by passage and rejoining.. In terms of biological role, releases the supercoiling and torsional tension of DNA, which is introduced during the DNA replication and transcription, by transiently cleaving and rejoining one strand of the DNA duplex. Introduces a single-strand break via transesterification at a target site in duplex DNA. The scissile phosphodiester is attacked by the catalytic tyrosine of the enzyme, resulting in the formation of a DNA-(5'-phosphotyrosyl)-enzyme intermediate and the expulsion of a 3'-OH DNA strand. The free DNA strand then undergoes passage around the unbroken strand, thus removing DNA supercoils. Finally, in the religation step, the DNA 3'-OH attacks the covalent intermediate to expel the active-site tyrosine and restore the DNA phosphodiester backbone. In Treponema pallidum (strain Nichols), this protein is DNA topoisomerase 1.